Consider the following 343-residue polypeptide: MSKLRLGVLFGGRSQEHEVSVMSARSVVKMAKKEKYKVIPFGITKKGQWVGPEESWNILNNGINEVKASKDRCITESVRVFLDHKLDIVFPVLHGPYGEDGKLQGFLDCLDIPYIGASVLSSAAGMDKEIMKNLFSYHKIPQARYRVYRQNHLENGLDGIISEIDRFLGWPCFVKPANMGSSIGVSKVHSPGEVKKALEKGFYYDRKLIFEEFVEGREIECSVLGNDQVEASLPGEILPGKEFYDYEAKYKDNKTRLVIPASLDESVIDKARNLAIKAFKAIDGNGFARVDFFLKNNGVLLVNEINTIPGFTQYSMYPKLWEATGLNYPDLIDKLIELALEDR.

The ATP-grasp domain maps to 132–337; it reads KNLFSYHKIP…YPDLIDKLIE (206 aa). 165–220 is a binding site for ATP; it reads DRFLGWPCFVKPANMGSSIGVSKVHSPGEVKKALEKGFYYDRKLIFEEFVEGREIE. Residues D291, E304, and N306 each contribute to the Mg(2+) site.

The protein belongs to the D-alanine--D-alanine ligase family. Mg(2+) serves as cofactor. It depends on Mn(2+) as a cofactor.

It localises to the cytoplasm. The enzyme catalyses 2 D-alanine + ATP = D-alanyl-D-alanine + ADP + phosphate + H(+). It functions in the pathway cell wall biogenesis; peptidoglycan biosynthesis. In terms of biological role, cell wall formation. The sequence is that of D-alanine--D-alanine ligase from Halothermothrix orenii (strain H 168 / OCM 544 / DSM 9562).